An 867-amino-acid chain; its full sequence is Leucine--tRNA ligase (867 aa).

Residues 42-52 carry the 'HIGH' region motif; sequence PYPSGNLHMGH. The 'KMSKS' region signature appears at 625–629; that stretch reads KMSKS. K628 contributes to the ATP binding site.

Belongs to the class-I aminoacyl-tRNA synthetase family.

The protein localises to the cytoplasm. The catalysed reaction is tRNA(Leu) + L-leucine + ATP = L-leucyl-tRNA(Leu) + AMP + diphosphate. The polypeptide is Leucine--tRNA ligase (Blochmanniella floridana).